The following is a 592-amino-acid chain: Monocopper oxidase-like protein SKS2 (592 aa).

Positions 1 to 23 (MAATDFFFAFVFSFALIFGFSFA) are cleaved as a signal peptide. N-linked (GlcNAc...) asparagine glycosylation is found at Asn-61, Asn-110, Asn-172, Asn-203, Asn-259, Asn-280, Asn-295, Asn-344, Asn-364, Asn-433, and Asn-447. Cu cation is bound at residue His-455. Asn-476 and Asn-536 each carry an N-linked (GlcNAc...) asparagine glycan. A lipid anchor (GPI-anchor amidated serine) is attached at Ser-564. A propeptide spans 565–592 (ATKSMTNGQLILIFSMMMVLLSSFSSFC) (removed in mature form).

It belongs to the multicopper oxidase family. It depends on Cu cation as a cofactor.

Its subcellular location is the cell membrane. The chain is Monocopper oxidase-like protein SKS2 (SKS2) from Arabidopsis thaliana (Mouse-ear cress).